We begin with the raw amino-acid sequence, 382 residues long: Protein RecA (382 aa).

79–86 (GPESSGKT) serves as a coordination point for ATP. Residues 362-382 (ATKSAAKGSEVQADVKTKGAA) form a disordered region.

This sequence belongs to the RecA family.

The protein resides in the cytoplasm. Functionally, can catalyze the hydrolysis of ATP in the presence of single-stranded DNA, the ATP-dependent uptake of single-stranded DNA by duplex DNA, and the ATP-dependent hybridization of homologous single-stranded DNAs. It interacts with LexA causing its activation and leading to its autocatalytic cleavage. This Synechococcus sp. (strain WH7803) protein is Protein RecA.